We begin with the raw amino-acid sequence, 538 residues long: Tetracenomycin C resistance and export protein (538 aa).

The next 14 membrane-spanning stretches (helical) occupy residues 28-48, 65-85, 100-120, 126-146, 154-174, 181-201, 213-233, 239-259, 286-306, 319-339, 342-362, 371-391, 413-433, and 494-514; these read LLAV…VAIA, WITN…GKLG, GFAV…IVVF, LFGA…FPPG, IWSG…GLLV, AVFF…LVIL, FDVS…WGLI, GWGD…FAGF, VLMV…TFYL, VHLL…GIVI, FGPG…LWGM, MGIT…VMVG, QSAM…LMAS, and MGLA…VALF.

This sequence belongs to the major facilitator superfamily. EmrB family.

Its subcellular location is the cell membrane. Its pathway is antibiotic biosynthesis; tetracenomycin C biosynthesis. Its function is as follows. Resistance to tetracenomycin C by an active tetracenomycin C efflux system which is probably energized by transmembrane electrochemical gradients. The protein is Tetracenomycin C resistance and export protein (tcmA) of Streptomyces glaucescens.